The primary structure comprises 92 residues: Small ribosomal subunit protein uS19c (92 aa).

This sequence belongs to the universal ribosomal protein uS19 family.

The protein resides in the plastid. It localises to the chloroplast. Its function is as follows. Protein S19 forms a complex with S13 that binds strongly to the 16S ribosomal RNA. The chain is Small ribosomal subunit protein uS19c from Spirogyra maxima (Green alga).